The chain runs to 287 residues: MPDELKPHFANVQAHYDLSDDFFRLFLDPTQTYSCAYFERDDMTLQEAQIAKIDLALGKLGLQPGMTLLDVGCGWGATMMRAVEKYDVNVVGLTLSKNQANHVQQLVANSENLRSKRVLLAGWEQFDEPVDRIVSIGAFEHFGHERYDAFFSLAHRLLPADGVMLLHTITGLHPKEIHERGLPMSFTFARFLKFIVTEIFPGGRLPSIPMVQECASANGFTVTRVQSLQPHYAKTLDLWSAALQANKGQDIALQSEEVYERYMKYLTGCAEMFRIGYIDVNQFTCQK.

S-adenosyl-L-methionine is bound by residues tyrosine 33–serine 34, leucine 68–glycine 76, threonine 94–glutamine 99, and tryptophan 123–glutamate 124. The active site involves cysteine 269.

It belongs to the CFA/CMAS family. As to quaternary structure, homodimer.

It is found in the cytoplasm. The enzyme catalyses a 1-acyl-2-(9Z)-enoyl-sn-glycero-3-phospholipid + S-adenosyl-L-methionine = a 1-acyl-2-(9-cyclopronane)-acyl-sn-glycero-3-phospholipid + S-adenosyl-L-homocysteine + H(+). It functions in the pathway lipid metabolism; mycolic acid biosynthesis. Functionally, catalyzes the conversion of a double bond to a cyclopropane ring at the distal position of an alpha mycolic acid via the transfer of a methylene group from S-adenosyl-L-methionine. Cyclopropanated mycolic acids are key factors participating in cell envelope permeability, host immunomodulation and persistence. The chain is Cyclopropane mycolic acid synthase 1 (cmaA1) from Mycobacterium tuberculosis (strain CDC 1551 / Oshkosh).